Here is a 338-residue protein sequence, read N- to C-terminus: tRNA (cytidine(56)-2'-O)-methyltransferase (338 aa).

S-adenosyl-L-methionine contacts are provided by residues Leu-79 and 105-109 (GSEKV). One can recognise an HD domain in the interval 188-295 (LINHVKSVKE…VAHADNLFAG (108 aa)).

Belongs to the aTrm56 family. As to quaternary structure, homodimer.

Its subcellular location is the cytoplasm. It catalyses the reaction cytidine(56) in tRNA + S-adenosyl-L-methionine = 2'-O-methylcytidine(56) in tRNA + S-adenosyl-L-homocysteine + H(+). Functionally, specifically catalyzes the AdoMet-dependent 2'-O-ribose methylation of cytidine at position 56 in tRNAs. The polypeptide is tRNA (cytidine(56)-2'-O)-methyltransferase (Thermoplasma volcanium (strain ATCC 51530 / DSM 4299 / JCM 9571 / NBRC 15438 / GSS1)).